The sequence spans 510 residues: GMP synthase [glutamine-hydrolyzing] (510 aa).

The 191-residue stretch at 5–195 (LVIVLDFGGQ…LFNIADLSAD (191 aa)) folds into the Glutamine amidotransferase type-1 domain. C82 acts as the Nucleophile in catalysis. Catalysis depends on residues H169 and E171. The GMPS ATP-PPase domain maps to 196-385 (WTMGSYIEET…LGLHREIVER (190 aa)). ATP is bound at residue 223 to 229 (SGGIDST).

As to quaternary structure, homodimer.

It carries out the reaction XMP + L-glutamine + ATP + H2O = GMP + L-glutamate + AMP + diphosphate + 2 H(+). It participates in purine metabolism; GMP biosynthesis; GMP from XMP (L-Gln route): step 1/1. Its function is as follows. Catalyzes the synthesis of GMP from XMP. The polypeptide is GMP synthase [glutamine-hydrolyzing] (Natranaerobius thermophilus (strain ATCC BAA-1301 / DSM 18059 / JW/NM-WN-LF)).